A 122-amino-acid polypeptide reads, in one-letter code: Hexon-interlacing protein (122 aa).

A coiled-coil region spans residues 72–106 (VTELNESIDELQQKMTELEKRLKIMEEKIEEIKLA).

It belongs to the adenoviridae hexon-interlacing protein family. As to quaternary structure, homotrimer. Interacts with hexon protein; this interaction tethers the hexons together. Self-interacts with adjacent proteins. Interacts with kinesin light chain KLC1; this interaction leads to capsid disruption at the nuclear pore complex during virus entry into host cell.

It localises to the virion. Its subcellular location is the host nucleus. Its function is as follows. Structural component of the virion that acts as a cement protein on the capsid exterior and forms triskelion structures consisting of three molecules that stabilize three hexon trimers at the center of each icosahedral facet and fixes the peripentonal hexons. Dispensable for assembly. During virus entry, recruits the anterograde motor kinesin-1 to the capsid docked at the nuclear pore complex thereby subjecting the docked capsid to a pulling force. The resulting tension leads to capsid disruption, dispersion of capsid fragments toward cell periphery and eventually viral DNA entry into the host nucleus. The sequence is that of Hexon-interlacing protein from Tupaiidae (tree shrews).